The sequence spans 25 residues: C-reactive protein P2 subunit 4 (25 aa).

The 25-residue stretch at 1–25 (GRSLVFPEETANSFVELFPAKELSL) folds into the Pentraxin (PTX) domain.

Belongs to the pentraxin family. Heteropentamer. Discoid arrangement of 5 non-covalently bound subunits 1, 2, 3 and 4. Ca(2+) serves as cofactor. In terms of processing, glycosylated.

The protein localises to the secreted. Functionally, displays several functions associated with host defense: it promotes agglutination, bacterial capsular swelling, phagocytosis, and complement fixation through its calcium-dependent binding to phosphorylcholine. The sequence is that of C-reactive protein P2 subunit 4 from Gadus morhua (Atlantic cod).